A 148-amino-acid polypeptide reads, in one-letter code: Putative nickel-responsive regulator (148 aa).

Ni(2+) contacts are provided by H88, H99, H101, and C107.

The protein belongs to the transcriptional regulatory CopG/NikR family. Requires Ni(2+) as cofactor.

Functionally, transcriptional regulator. The protein is Putative nickel-responsive regulator of Helicobacter pylori (strain Shi470).